Here is an 89-residue protein sequence, read N- to C-terminus: Small ribosomal subunit protein uS15 (89 aa).

This sequence belongs to the universal ribosomal protein uS15 family. As to quaternary structure, part of the 30S ribosomal subunit. Forms a bridge to the 50S subunit in the 70S ribosome, contacting the 23S rRNA.

Functionally, one of the primary rRNA binding proteins, it binds directly to 16S rRNA where it helps nucleate assembly of the platform of the 30S subunit by binding and bridging several RNA helices of the 16S rRNA. In terms of biological role, forms an intersubunit bridge (bridge B4) with the 23S rRNA of the 50S subunit in the ribosome. This Jannaschia sp. (strain CCS1) protein is Small ribosomal subunit protein uS15.